We begin with the raw amino-acid sequence, 374 residues long: Wnt inhibitory factor 1 (374 aa).

The first 28 residues, 1-28 (MSLTGYFAAPLCSIFLFILAHADAGQQE), serve as a signal peptide directing secretion. Positions 33–172 (MWIDAHQARV…PQNAIFFKTC (140 aa)) constitute a WIF domain. N-linked (GlcNAc...) asparagine glycosylation is present at Asn83. 7 cysteine pairs are disulfide-bonded: Cys135–Cys172, Cys177–Cys187, Cys181–Cys193, Cys195–Cys204, Cys209–Cys219, Cys213–Cys225, and Cys227–Cys236. EGF-like domains are found at residues 173–205 (QQAK…PHCE), 208–237 (LCMP…INCD), 237–269 (DKVN…EQCE), 270–301 (TSKC…DLCS), and 302–333 (KPVC…RYCN). N-linked (GlcNAc...) asparagine glycosylation is present at Asn240. Disulfide bonds link Cys241–Cys251, Cys245–Cys257, Cys259–Cys268, Cys273–Cys283, Cys277–Cys289, Cys291–Cys300, Cys305–Cys315, Cys309–Cys321, and Cys323–Cys332. The tract at residues 343–374 (ALRPTGSRNRQHTPSPKRTEDRQALPESNYIW) is disordered. Over residues 348-358 (GSRNRQHTPSP) the composition is skewed to polar residues.

In terms of tissue distribution, during somatogenesis, expressed predominantly in unsegmented paraxial presomitic mesoderm and, to a much lesser extent, in newly segmented somites.

The protein resides in the secreted. Binds to WNT proteins and inhibits their activities. May be involved in mesoderm segmentation. The protein is Wnt inhibitory factor 1 (wif1) of Xenopus laevis (African clawed frog).